The following is a 1855-amino-acid chain: Unconventional myosin-Va (1855 aa).

A2 bears the N-acetylalanine mark. The region spanning 8–60 (TKFARVWIPDPEEVWKSAELLKDYKPGDKVLLLHLEEGKDLEYHLDPKTKELP) is the Myosin N-terminal SH3-like domain. A Myosin motor domain is found at 69 to 763 (VGENDLTALS…QVAYLEKLRA (695 aa)). 163-170 (GESGAGKT) serves as a coordination point for ATP. Positions 598 to 631 (AISPTSATSSGRTPLTRTPAKPTKGRPGQMAKEH) are disordered. At S600 the chain carries Phosphoserine. Polar residues predominate over residues 600 to 613 (SPTSATSSGRTPLT). The interval 643–665 (LHLLMETLNATTPHYVRCIKPND) is actin-binding. IQ domains follow at residues 766-788 (LRAA…KYLR), 789-818 (MRKA…TKAA), 814-836 (RTKA…RYKI), 837-861 (RRAA…RKIL), 862-883 (REHK…THYK), and 885-914 (SMHA…EARS). Coiled coils occupy residues 914–1237 (SVER…APEV) and 1338–1445 (VYEG…ELEV). T1032 bears the Phosphothreonine mark. A phosphoserine mark is found at S1452 and S1652. The Dilute domain occupies 1534–1810 (TSTINSIKKV…IRTIQMRLRD (277 aa)). The residue at position 1760 (T1760) is a Phosphothreonine.

Belongs to the TRAFAC class myosin-kinesin ATPase superfamily. Myosin family. As to quaternary structure, may be a homodimer, which associates with multiple calmodulin or myosin light chains. Interacts with RIPL2, the interaction is required for its role in dendrite formation. Interacts with MLPH. Interacts with SYTL4. Interacts with MYRIP. Interacts with RAB10; mediates the transport to the plasma membrane of SLC2A4/GLUT4 storage vesicles. Interacts with FMR1; this interaction occurs in association with polyribosome. In terms of tissue distribution, detected in melanocytes.

It carries out the reaction ATP + H2O = ADP + phosphate + H(+). Functionally, processive actin-based motor that can move in large steps approximating the 36-nm pseudo-repeat of the actin filament. Can hydrolyze ATP in the presence of actin, which is essential for its function as a motor protein. Involved in melanosome transport. Also mediates the transport of vesicles to the plasma membrane. May also be required for some polarization process involved in dendrite formation. The protein is Unconventional myosin-Va (MYO5A) of Homo sapiens (Human).